The primary structure comprises 517 residues: Dopamine receptor 4 (517 aa).

At 1–46 (MLAYGSDPNAEDLYITMTPSVSTENDTTVWATEEPAAIVWRHPLLA) the chain is on the extracellular side. Residue Asn25 is glycosylated (N-linked (GlcNAc...) asparagine). Residues 47–67 (IALFSICLLTVAGNCLVVIAV) traverse the membrane as a helical segment. The Cytoplasmic segment spans residues 68–77 (CTKKYLRNPT). Residues 78 to 98 (GYLIISLAIADLIVGVIVMPM) form a helical membrane-spanning segment. Topologically, residues 99-108 (NSLFEIANHT) are extracellular. N-linked (GlcNAc...) asparagine glycosylation occurs at Asn106. A helical transmembrane segment spans residues 109–129 (WLFGLMMCDVFHAMDILASTA). Over 130-159 (SIWNLCVISLDRYMAGQDPIGYRDKVSKRR) the chain is Cytoplasmic. Residues 160–180 (ILMAILSVWVLSAILSFPGII) form a helical membrane-spanning segment. The Extracellular segment spans residues 181 to 209 (WWRTSSPHLYEDQSQCLFTDSKMYVSFSS). Residues 210-230 (LVSFYIPLFLILFAYGKVYII) form a helical membrane-spanning segment. Topologically, residues 231 to 409 (ATRHSKGMRM…YVHEQRAART (179 aa)) are cytoplasmic. Residues 309–339 (NDRGEHNNNNTVRQPLLRGTEGCHSDSISRS) are disordered. The chain crosses the membrane as a helical span at residues 410–430 (LSIVVGAFILCWTPFFVFTPL). Over 431–442 (TAFCESCFSNKE) the chain is Extracellular. The helical transmembrane segment at 443-463 (TIFTFVTWAGHLNSMLNPLIY) threads the bilayer. The Cytoplasmic portion of the chain corresponds to 464–517 (SRFSRDFRRAFKQILTCQRQQKVKTAFKTPLSLVFTQLISVTQMWEQPPNTSIE).

Belongs to the G-protein coupled receptor 1 family. As to expression, expressed in pharyngeal neurons I1 and I2, neurons ASG, AVL, CAN, PQR, vulva, intestine, rectal glands and rectal epithelial glands. Also expressed in neurons in ray 8 in males.

The protein localises to the cell membrane. Its function is as follows. Receptor for dopamine. The activity of this receptor is mediated by G proteins which activate adenylyl cyclase. In terms of antagonist responses, would be classed with the D1-like dopamine receptor group. In Caenorhabditis elegans, this protein is Dopamine receptor 4 (dop-4).